The following is a 147-amino-acid chain: Phosphoribosyl-AMP cyclohydrolase (147 aa).

D91 is a binding site for Mg(2+). C92 is a binding site for Zn(2+). D93 and D95 together coordinate Mg(2+). Zn(2+)-binding residues include C109 and C116.

Belongs to the PRA-CH family. Homodimer. Requires Mg(2+) as cofactor. The cofactor is Zn(2+).

The protein localises to the cytoplasm. It catalyses the reaction 1-(5-phospho-beta-D-ribosyl)-5'-AMP + H2O = 1-(5-phospho-beta-D-ribosyl)-5-[(5-phospho-beta-D-ribosylamino)methylideneamino]imidazole-4-carboxamide. Its pathway is amino-acid biosynthesis; L-histidine biosynthesis; L-histidine from 5-phospho-alpha-D-ribose 1-diphosphate: step 3/9. Its function is as follows. Catalyzes the hydrolysis of the adenine ring of phosphoribosyl-AMP. This is Phosphoribosyl-AMP cyclohydrolase from Rhodopseudomonas palustris (strain BisB18).